Consider the following 487-residue polypeptide: Reticulon-like protein B21 (487 aa).

Residues 1-22 (MTPRRSLSSSDSNDKSPSVSVV) are compositionally biased toward low complexity. Disordered stretches follow at residues 1-43 (MTPR…PGRV), 65-86 (LRKV…TEQE), and 113-149 (KSNE…EKKS). Basic and acidic residues predominate over residues 26–38 (ARSESVEGIEKKT). Positions 118-143 (EQIDNGDQEIGDQDDYEEDGDEEEER) are enriched in acidic residues. The region spanning 230 to 419 (LVDLVMWRDV…FTLVWNLSSV (190 aa)) is the Reticulon domain. A run of 4 helical transmembrane segments spans residues 242–262 (STLV…ANDL), 264–284 (FSFI…MFVL), 354–374 (ITLW…PKIF), and 413–433 (VWNL…LVAF). Positions 446-463 (QADDDEDDNEEEEAEEEK) are enriched in acidic residues. Residues 446–487 (QADDDEDDNEEEEAEEEKEQVPPKHKRAPPHMMMPNKLKKIS) form a disordered region.

The protein localises to the endoplasmic reticulum membrane. In Arabidopsis thaliana (Mouse-ear cress), this protein is Reticulon-like protein B21 (RTNLB21).